Here is a 421-residue protein sequence, read N- to C-terminus: 4-hydroxy-3-methylbut-2-en-1-yl diphosphate synthase (flavodoxin) (421 aa).

Residues Cys-311, Cys-314, Cys-357, and Glu-364 each contribute to the [4Fe-4S] cluster site.

The protein belongs to the IspG family. The cofactor is [4Fe-4S] cluster.

It catalyses the reaction (2E)-4-hydroxy-3-methylbut-2-enyl diphosphate + oxidized [flavodoxin] + H2O + 2 H(+) = 2-C-methyl-D-erythritol 2,4-cyclic diphosphate + reduced [flavodoxin]. The protein operates within isoprenoid biosynthesis; isopentenyl diphosphate biosynthesis via DXP pathway; isopentenyl diphosphate from 1-deoxy-D-xylulose 5-phosphate: step 5/6. In terms of biological role, converts 2C-methyl-D-erythritol 2,4-cyclodiphosphate (ME-2,4cPP) into 1-hydroxy-2-methyl-2-(E)-butenyl 4-diphosphate. This is 4-hydroxy-3-methylbut-2-en-1-yl diphosphate synthase (flavodoxin) from Xanthomonas oryzae pv. oryzae (strain MAFF 311018).